The following is a 248-amino-acid chain: Stress-related protein (248 aa).

The protein belongs to the REF/SRPP family.

This chain is Stress-related protein (SRP), found in Vitis riparia (Frost grape).